The chain runs to 413 residues: Protein PHR1-LIKE 1 (413 aa).

2 disordered regions span residues 171–196 (SEPN…TPFL) and 208–233 (QQQM…SKQR). 2 stretches are compositionally biased toward polar residues: residues 181–191 (DSSSHNPNSEI) and 208–231 (QQQM…ATSK). Positions 228–288 (ATSKQRMRWT…HLQKYRTARY (61 aa)) constitute an HTH myb-type domain. Residues 259–284 (PKAVLKLLNNPGLTIYHVKSHLQKYR) constitute a DNA-binding region (H-T-H motif). The interval 322 to 342 (TQALRLQMEVQKRLHEQLEIQ) is coiled coil. Positions 335–340 (LHEQLE) match the LHEQLE motif. Residues 363–413 (QQKIQDNKSSSSEASPKQCNGSFAEVEVGLETLTGDQNESASASRKRVRED) form a disordered region. 2 stretches are compositionally biased toward polar residues: residues 369–383 (NKSS…QCNG) and 396–405 (TGDQNESASA).

It belongs to the MYB-CC family. Homodimers and heterodimers. Interacts with MED25. Does not interact with PHL2 or PHL3. In terms of tissue distribution, expressed in shoots and roots.

The protein resides in the nucleus. Functionally, transcription factor acting as central integrator of phosphate starvation responses. Regulates FER1 expression upon phosphate starvation, linking iron and phosphate homeostasis. This Arabidopsis thaliana (Mouse-ear cress) protein is Protein PHR1-LIKE 1 (PHL1).